Here is a 307-residue protein sequence, read N- to C-terminus: UDP-N-acetylenolpyruvoylglucosamine reductase (307 aa).

The FAD-binding PCMH-type domain maps to leucine 34–alanine 198. The active site involves arginine 177. The Proton donor role is filled by serine 227. Glutamate 297 is a catalytic residue.

The protein belongs to the MurB family. FAD serves as cofactor.

It is found in the cytoplasm. It catalyses the reaction UDP-N-acetyl-alpha-D-muramate + NADP(+) = UDP-N-acetyl-3-O-(1-carboxyvinyl)-alpha-D-glucosamine + NADPH + H(+). It functions in the pathway cell wall biogenesis; peptidoglycan biosynthesis. Its function is as follows. Cell wall formation. The sequence is that of UDP-N-acetylenolpyruvoylglucosamine reductase from Oceanobacillus iheyensis (strain DSM 14371 / CIP 107618 / JCM 11309 / KCTC 3954 / HTE831).